A 369-amino-acid polypeptide reads, in one-letter code: Chorismate synthase (369 aa).

Residues Arg48 and Arg54 each contribute to the NADP(+) site. Residues 125–127 (RSS), 238–239 (NA), Gly278, 293–297 (KPTSS), and Arg319 contribute to the FMN site.

Belongs to the chorismate synthase family. In terms of assembly, homotetramer. FMNH2 is required as a cofactor.

The catalysed reaction is 5-O-(1-carboxyvinyl)-3-phosphoshikimate = chorismate + phosphate. Its pathway is metabolic intermediate biosynthesis; chorismate biosynthesis; chorismate from D-erythrose 4-phosphate and phosphoenolpyruvate: step 7/7. Functionally, catalyzes the anti-1,4-elimination of the C-3 phosphate and the C-6 proR hydrogen from 5-enolpyruvylshikimate-3-phosphate (EPSP) to yield chorismate, which is the branch point compound that serves as the starting substrate for the three terminal pathways of aromatic amino acid biosynthesis. This reaction introduces a second double bond into the aromatic ring system. The protein is Chorismate synthase of Burkholderia mallei (strain ATCC 23344).